A 65-amino-acid chain; its full sequence is Large ribosomal subunit protein bL35 (65 aa).

Residues 1–16 (MVPKQKTHSGAKKRFK) are compositionally biased toward basic residues. Residues 1-39 (MVPKQKTHSGAKKRFKLTGSGSVSRARAGMRHNFEHRSS) form a disordered region.

It belongs to the bacterial ribosomal protein bL35 family.

This Tropheryma whipplei (strain TW08/27) (Whipple's bacillus) protein is Large ribosomal subunit protein bL35.